Consider the following 111-residue polypeptide: Nucleoid-associated protein glr3498 (111 aa).

The protein belongs to the YbaB/EbfC family. As to quaternary structure, homodimer.

Its subcellular location is the cytoplasm. It localises to the nucleoid. Its function is as follows. Binds to DNA and alters its conformation. May be involved in regulation of gene expression, nucleoid organization and DNA protection. The chain is Nucleoid-associated protein glr3498 from Gloeobacter violaceus (strain ATCC 29082 / PCC 7421).